The primary structure comprises 310 residues: Glutaminase 1 (310 aa).

The substrate site is built by S66, N117, E161, N168, Y192, Y244, and V262. K294 carries the post-translational modification N6-acetyllysine.

This sequence belongs to the glutaminase family. Homotetramer.

The enzyme catalyses L-glutamine + H2O = L-glutamate + NH4(+). This Escherichia coli O6:H1 (strain CFT073 / ATCC 700928 / UPEC) protein is Glutaminase 1.